The chain runs to 60 residues: Large ribosomal subunit protein bL32 (60 aa).

Positions 1-60 (MAVQQVKKSRSKRDMRRSHDSLTGPTLSTDKSTGELHLRHHVSPNGFYKGKKVVDTKSED) are disordered. The segment covering 7 to 16 (KKSRSKRDMR) has biased composition (basic residues).

Belongs to the bacterial ribosomal protein bL32 family.

The chain is Large ribosomal subunit protein bL32 from Francisella philomiragia subsp. philomiragia (strain ATCC 25017 / CCUG 19701 / FSC 153 / O#319-036).